We begin with the raw amino-acid sequence, 297 residues long: Protease HtpX homolog (297 aa).

A helical transmembrane segment spans residues 16–36 (IFMAIGFLVGGMAGMILAFVV). Zn(2+) is bound at residue histidine 134. The active site involves glutamate 135. Histidine 138 provides a ligand contact to Zn(2+). The next 2 membrane-spanning stretches (helical) occupy residues 147–167 (MTVT…ALFF) and 175–195 (IGSI…QMAI). Position 200 (glutamate 200) interacts with Zn(2+).

This sequence belongs to the peptidase M48B family. Zn(2+) serves as cofactor.

The protein localises to the cell inner membrane. This chain is Protease HtpX homolog, found in Hyphomonas neptunium (strain ATCC 15444).